A 115-amino-acid polypeptide reads, in one-letter code: Divalent-cation tolerance protein CutA (115 aa).

Positions 19, 86, and 87 each coordinate Cu cation.

The protein belongs to the CutA family. Homotrimer. It depends on Cu cation as a cofactor.

It localises to the cytoplasm. Involved in resistance toward heavy metals. The protein is Divalent-cation tolerance protein CutA of Salmonella agona (strain SL483).